A 229-amino-acid polypeptide reads, in one-letter code: Large ribosomal subunit protein uL1 (229 aa).

The protein belongs to the universal ribosomal protein uL1 family. Part of the 50S ribosomal subunit.

In terms of biological role, binds directly to 23S rRNA. The L1 stalk is quite mobile in the ribosome, and is involved in E site tRNA release. Protein L1 is also a translational repressor protein, it controls the translation of the L11 operon by binding to its mRNA. The sequence is that of Large ribosomal subunit protein uL1 from Streptococcus thermophilus (strain CNRZ 1066).